Here is a 176-residue protein sequence, read N- to C-terminus: Ribosome rescue factor SmrB (176 aa).

The Smr domain occupies 93–168; that stretch reads LDLHGYRQSE…GDAALLVLID (76 aa).

Belongs to the SmrB family. Associates with collided ribosomes, but not with correctly translating polysomes.

In terms of biological role, acts as a ribosome collision sensor. Detects stalled/collided disomes (pairs of ribosomes where the leading ribosome is stalled and a second ribosome has collided with it) and endonucleolytically cleaves mRNA at the 5' boundary of the stalled ribosome. Stalled/collided disomes form a new interface (primarily via the 30S subunits) that binds SmrB. Cleaved mRNA becomes available for tmRNA ligation, leading to ribosomal subunit dissociation and rescue of stalled ribosomes. The chain is Ribosome rescue factor SmrB from Shewanella putrefaciens (strain CN-32 / ATCC BAA-453).